A 355-amino-acid chain; its full sequence is RNA 3'-terminal phosphate cyclase (355 aa).

ATP-binding positions include Gln-109 and His-291–Gln-295. Residue His-316 is the Tele-AMP-histidine intermediate of the active site.

The protein belongs to the RNA 3'-terminal cyclase family. Type 1 subfamily.

The protein resides in the cytoplasm. It catalyses the reaction a 3'-end 3'-phospho-ribonucleotide-RNA + ATP = a 3'-end 2',3'-cyclophospho-ribonucleotide-RNA + AMP + diphosphate. Catalyzes the conversion of 3'-phosphate to a 2',3'-cyclic phosphodiester at the end of RNA. The mechanism of action of the enzyme occurs in 3 steps: (A) adenylation of the enzyme by ATP; (B) transfer of adenylate to an RNA-N3'P to produce RNA-N3'PP5'A; (C) and attack of the adjacent 2'-hydroxyl on the 3'-phosphorus in the diester linkage to produce the cyclic end product. The biological role of this enzyme is unknown but it is likely to function in some aspects of cellular RNA processing. The protein is RNA 3'-terminal phosphate cyclase of Koribacter versatilis (strain Ellin345).